Consider the following 482-residue polypeptide: Matrix metalloproteinase-20 (482 aa).

Positions 1 to 21 are cleaved as a signal peptide; the sequence is MKVLPASGLAVLVTALKFATA. Residues 22 to 106 constitute a propeptide that is removed on maturation; sequence DPNLLAATPR…PRCGVPDVAN (85 aa). The Cysteine switch signature appears at 97 to 104; it reads PRCGVPDV. A Zn(2+)-binding site is contributed by C99. 3 residues coordinate Ca(2+): E163, A164, and D165. 2 residues coordinate Zn(2+): H175 and D177. Positions 182, 183, 185, and 187 each coordinate Ca(2+). H190 contacts Zn(2+). Positions 196, 197, 199, and 201 each coordinate Ca(2+). H203 contributes to the Zn(2+) binding site. Ca(2+) is bound by residues D205 and E208. H225 contacts Zn(2+). E226 is a catalytic residue. H229 and H235 together coordinate Zn(2+). Hemopexin repeat units lie at residues 292-342, 343-388, 390-438, and 439-482; these read PDLC…FPQL, MSNV…GFPR, VQRI…FSGV, and SGHI…WIGC. C295 and C482 are oxidised to a cystine.

The protein belongs to the peptidase M10A family. Requires Zn(2+) as cofactor. The cofactor is Ca(2+). Post-translationally, autoactivates at least at the 106-Asn-|-Tyr-107 site. As to expression, expressed in the enamel organ.

The protein resides in the secreted. It is found in the extracellular space. The protein localises to the extracellular matrix. Functionally, degrades amelogenin, the major protein component of the enamel matrix and two of the macromolecules characterizing the cartilage extracellular matrix: aggrecan and the cartilage oligomeric matrix protein (COMP). May play a central role in tooth enamel formation. Cleaves aggrecan at the '360-Asn-|-Phe-361' site. The sequence is that of Matrix metalloproteinase-20 (Mmp20) from Mus musculus (Mouse).